Reading from the N-terminus, the 525-residue chain is GMP synthase [glutamine-hydrolyzing] (525 aa).

A Glutamine amidotransferase type-1 domain is found at 16–205 (PVLVVDFGAQ…LHDFAGLGAQ (190 aa)). C93 serves as the catalytic Nucleophile. Catalysis depends on residues H179 and E181. In terms of domain architecture, GMPS ATP-PPase spans 206-399 (WTPANIANAL…LGLPEEIVAR (194 aa)). 233–239 (SGGVDSA) serves as a coordination point for ATP.

As to quaternary structure, homodimer.

It carries out the reaction XMP + L-glutamine + ATP + H2O = GMP + L-glutamate + AMP + diphosphate + 2 H(+). The protein operates within purine metabolism; GMP biosynthesis; GMP from XMP (L-Gln route): step 1/1. Catalyzes the synthesis of GMP from XMP. This chain is GMP synthase [glutamine-hydrolyzing], found in Mycobacterium bovis (strain BCG / Pasteur 1173P2).